The chain runs to 631 residues: MGKVIGIDLGTTNSCVAVMDGKSAKVIENAEGMRTTPSIVAITDDGERLVGQPAKRQAVTNPERTFFAVKRLIGRRYDDPMVEKDKGLVPYKIVKASNGDAWVEADGKTYSPSQVSAFILQKMKETAEAHLGQKVDQAVITVPAYFNDAQRQATKDAGKIAGLEVLRIINEPTAAALAYGLDKAKTGTIAVYDLGGGTFDVSILEIGDGVFEVKSTNGDTFLGGEDFDMRLVNYLADEFQKEQGIDLRKDKLALQRLKEAAEKAKIELSSTTQTEINLPFITADQSGPKHLTMKLTRAKFEALVDDLVQKTIEPCRKALKDAGLTAGEISEVVLVGGMTRMPKVQEVVKQLFGKEPHKGVNPDEVVAIGAAIQAGVLQGDVKDVLLLDVTPLSLGIETLGGVFTRIIDRNTTIPTKKSQVFSTAEDNQNAVTIRVFQGEREMAADNKMLGQFDLMGIPPAPRGMPQIEVTFDIDANGIVNVSAKDKATGKEQQIRIQASGGLSDSEIDKMVKDAEANAAEDKKRREAVDAKNHADALVHSTEKALAEHGSKVDESERRSIEDALSDLREALKGDDAEAIKAKSNTLAQASMKLGEAMYKQAEAAGGAQQAGKDDVVDAEFTEVDDDKKKSA.

At Thr198 the chain carries Phosphothreonine; by autocatalysis. Residues Glu602–Ala631 form a disordered region.

This sequence belongs to the heat shock protein 70 family.

Its function is as follows. Acts as a chaperone. This is Chaperone protein DnaK from Rhodopseudomonas palustris (strain ATCC BAA-98 / CGA009).